Reading from the N-terminus, the 267-residue chain is Exosome complex component Rrp42 (267 aa).

This sequence belongs to the RNase PH family. Rrp42 subfamily. Component of the archaeal exosome complex. Forms a hexameric ring-like arrangement composed of 3 Rrp41-Rrp42 heterodimers. The hexameric ring associates with a trimer of Rrp4 and/or Csl4 subunits.

The protein localises to the cytoplasm. Its function is as follows. Non-catalytic component of the exosome, which is a complex involved in RNA degradation. Contributes to the structuring of the Rrp41 active site. This chain is Exosome complex component Rrp42, found in Methanopyrus kandleri (strain AV19 / DSM 6324 / JCM 9639 / NBRC 100938).